Consider the following 139-residue polypeptide: Maintenance of telomere capping protein 7 (139 aa).

2 consecutive transmembrane segments (helical) span residues 13–33 (SHHV…FVLL) and 42–62 (FYFL…FVFI). Residues 94–121 (RSVANPALPPQKKKKKKKKGTLRTGEVE) are disordered. Residues 104–114 (QKKKKKKKKGT) are compositionally biased toward basic residues.

The protein resides in the membrane. Its function is as follows. May be involved in telomere capping. The sequence is that of Maintenance of telomere capping protein 7 (MTC7) from Saccharomyces cerevisiae (strain ATCC 204508 / S288c) (Baker's yeast).